Reading from the N-terminus, the 866-residue chain is Leucine--tRNA ligase (866 aa).

The 'HIGH' region motif lies at 42–52 (PYPSGKLHMGH). The short motif at 630-634 (KMSKS) is the 'KMSKS' region element. Position 633 (Lys633) interacts with ATP.

It belongs to the class-I aminoacyl-tRNA synthetase family.

The protein localises to the cytoplasm. It carries out the reaction tRNA(Leu) + L-leucine + ATP = L-leucyl-tRNA(Leu) + AMP + diphosphate. The polypeptide is Leucine--tRNA ligase (Laribacter hongkongensis (strain HLHK9)).